Consider the following 174-residue polypeptide: CEN-like protein 1 (174 aa).

It belongs to the phosphatidylethanolamine-binding protein family. Expressed in vegetative axillary meristems but not in the main shoot meristem.

The protein resides in the cytoplasm. In terms of biological role, may form complexes with phosphorylated ligands by interfering with kinases and their effectors. The sequence is that of CEN-like protein 1 (CET1) from Nicotiana tabacum (Common tobacco).